The sequence spans 434 residues: Probable transcription factor HMS1 (434 aa).

The bHLH domain occupies 266–341 (TGRVSHNIIE…TKSIEYICHL (76 aa)). Positions 365 to 434 (HLTEPSQPLS…DMDFNNAGDF (70 aa)) are disordered. 2 stretches are compositionally biased toward polar residues: residues 368-382 (EPSQ…SEQV) and 402-423 (PLHN…TNNS).

In terms of assembly, interacts with the G1/S-specific cyclin PCL1. Phosphorylated by the cyclin-CDK complex PCL1-PHO85.

The protein localises to the nucleus. Functionally, involved in exit from mitosis and pseudohyphal differentiation. The protein is Probable transcription factor HMS1 (HMS1) of Saccharomyces cerevisiae (strain ATCC 204508 / S288c) (Baker's yeast).